A 338-amino-acid chain; its full sequence is 1-aminocyclopropane-1-carboxylate deaminase (338 aa).

Residue K51 is modified to N6-(pyridoxal phosphate)lysine. The active-site Nucleophile is S78.

This sequence belongs to the ACC deaminase/D-cysteine desulfhydrase family. In terms of assembly, homotrimer. Requires pyridoxal 5'-phosphate as cofactor.

The catalysed reaction is 1-aminocyclopropane-1-carboxylate + H2O = 2-oxobutanoate + NH4(+). Functionally, catalyzes a cyclopropane ring-opening reaction, the irreversible conversion of 1-aminocyclopropane-1-carboxylate (ACC) to ammonia and alpha-ketobutyrate. Allows growth on ACC as a nitrogen source. The protein is 1-aminocyclopropane-1-carboxylate deaminase of Ralstonia nicotianae (strain ATCC BAA-1114 / GMI1000) (Ralstonia solanacearum).